The following is a 233-amino-acid chain: Cilia- and flagella-associated protein 299 (233 aa).

The protein localises to the cytoplasm. Its subcellular location is the nucleus. In terms of biological role, may be involved in spermatogenesis. This Homo sapiens (Human) protein is Cilia- and flagella-associated protein 299.